Consider the following 258-residue polypeptide: Short-chain dehydrogenase reductase 3c (258 aa).

12 to 36 (IITGGASGIGADAARLFTDHGAKVV) is an NAD(+) binding site. Residue S144 coordinates substrate. The active-site Proton acceptor is Y156.

This sequence belongs to the short-chain dehydrogenases/reductases (SDR) family.

This chain is Short-chain dehydrogenase reductase 3c (SDR3c), found in Arabidopsis thaliana (Mouse-ear cress).